The chain runs to 289 residues: Probable endonuclease 4 (289 aa).

9 residues coordinate Zn(2+): H74, H115, E150, D184, H187, H218, D231, H233, and E263.

This sequence belongs to the AP endonuclease 2 family. Requires Zn(2+) as cofactor.

The enzyme catalyses Endonucleolytic cleavage to 5'-phosphooligonucleotide end-products.. In terms of biological role, endonuclease IV plays a role in DNA repair. It cleaves phosphodiester bonds at apurinic or apyrimidinic (AP) sites, generating a 3'-hydroxyl group and a 5'-terminal sugar phosphate. The sequence is that of Probable endonuclease 4 from Mycoplasma capricolum subsp. capricolum (strain California kid / ATCC 27343 / NCTC 10154).